Reading from the N-terminus, the 1941-residue chain is MSNFLKPNTLHVDSLSPRHRSLSSGLSSGLSSACSSGSVSPVPIIPIIAISRIRDGDESESESEIELEPARIFHRRMSINNSGNNKRSTNLASIIKEGYLLKHTWSFQRWRRRYFRLKRNHLYYAKDAKCDVFDEIDLSELCYFECSIKNVNHSFQIITPTRSVVLCADSRRDMEDWLGSLKAATAPQRPRGDSILIDQHDILSNHHHWYATSHARPTYCNVCRDALSGVTSHGLSCEVCKCKVHKRCAAKAIANCKWTTLATVGKDIIEQPDGSIIMPHQWMEGNLPVSSICAVCKKTCGSVLRLQDWRCLWCRDTVHVACRPQMAIACPIGPAKLSVVPPTSVHSISTDDAWDVASPKGNFSPLLVFVNSKSGDNQGVKFLRRFKQLLNPAQVFDLISTGPSLGLRLFRHFEMFRILVCSGDGSVGWVLSEIDRFNMHKQCQVAVMPLGTGNDLARVLGWGSSCDDDTHLPQILERYESASTKMLDRWSIMVFEKAISVPKIPKMSITTEQEAVLTGMVTAANQHLRLIVETNDTQTLISSTRNLCDTIDDLVSRIFEHHKDDEQLAVKCDILKQKLTMLLDALQEEEIGAHSGDDLIATIRSLIARSVPSTNSARPSLLNPNISIEKTEKDHINLKERRSSRSLRSSEKEALQCRANSVKRAIYNVVEHSEPGRPKRYQRKLSITPFEALKIPTNSGESTPCSSPLPIIPPINIISPTMETSRLTCISPLPDTRRDSVDENFFNSINLPAPRQFADSRRSSGVPEVIQELEEGANGETIYRIGRLSLSGGANIDDAGNRLSPVSDGGDNSPIDRKLDFLRVPIITSDSIVDPLSDYRPIEVFERTYYMARELDKDKDKERKQDVVLDGEKEEDAGVNEKCEEQTLHPQNTLVHTCNLQVPGIVVTPQSQNVYTSDSITIIDTDQQSNTLQEQSSSEELGCDASDVLSAISNEECSVASEIFDKAETGHTLGDIIQNLDASNFTHIDSPETSDETEAMPGESLMDDISSVLGHDITNALQDNTITDDTTTLCSEHMGPPKPPRKKSMSALSKSQIHPRRRNSSPPRMARLARMDSDDNPQQFGFENIVFEIDNRCDDQKMREPPRYCSLAQFVEGNDIARQSFKQLMLECNSNNNSNNNSNSNSNNNNHNDGNSNDEPETPTNTVITLAHSQLTTTSTSDELDELSTQTAIKIEIHDADSSTMCTTTATTKPLESAMASSTSPTKRSGLGQDISVVVRPPTPLRGDSIKPTPSSSSILSSSLLGVRSLNSSEIRRHSSHAPSLAVREYDKDKDRRHSGFNPNYLALDPEHARFLSSSPAASRRISCGSLFKKNQKYYTKRTYGLFRVRFFVVAEPDIRLATLALIRPLIPLPNEALPNLQTLKGSKSSLFMGSTLFGFEHFSDKEERQGKDKERTPPEETSRKMPIINPIVRLPNWPNLANGTGFISKCLLANADTLCAAVSPLMDPDETLLAGYHEKCVMNNYFGIGIDAKISLDFHNKREEHPEKCRSRARNYMWYGVLGSKQLLQKTCKNLEQRVQLECDGQRIPLPELQGIVILNIPSFMGGTNFWGSSTKKDDIFLPPSFDDRVLEVVAVFGSVQMAASRLINLQHHRIAQCQSVQINILGDEEIPIQVDGEAWLQPPGMIRILHKNRVQMLCRNRSLEVSLKSWQEKQRQHSISIQRDASSTASEHAVSTDDVISERECYVLLNFIEAVSSLVKWVKFLIISHPALQHDLYEVACRASEALESIHPQGKLLEGPSLRTKLVEVIDSSRQLYDDACTLLRDRGHSLILREDLETKLSAALANMEMELKKCSVQKCIDGKLRAYFNVLAPNEESDGRRKSRPFWVRLRSGSTAGQQQFKPPMTNTREAANNWSVNEVVTWLETMQLSEYVDSFLKNDIRGKELLTLGRRDLKDLGVVKVGHVKRILQAIKDLSEN.

Residues 93 to 186 (SIIKEGYLLK…WLGSLKAATA (94 aa)) form the PH domain. 2 consecutive Phorbol-ester/DAG-type zinc fingers follow at residues 206–256 (HHHW…IANC) and 279–330 (PHQW…AIAC). Residues 361-497 (GNFSPLLVFV…DRWSIMVFEK (137 aa)) enclose the DAGKc domain. Disordered stretches follow at residues 1030-1068 (TTTL…SPPR), 1132-1164 (CNSN…ETPT), 1215-1257 (LESA…PSSS), and 1276-1295 (RRHS…KDKD). Residues 1133-1155 (NSNNNSNNNSNSNSNNNNHNDGN) are compositionally biased toward low complexity. The region spanning 1878–1941 (WSVNEVVTWL…LQAIKDLSEN (64 aa)) is the SAM domain.

It belongs to the eukaryotic diacylglycerol kinase family.

It is found in the cytoplasm. The enzyme catalyses a 1,2-diacyl-sn-glycerol + ATP = a 1,2-diacyl-sn-glycero-3-phosphate + ADP + H(+). Its function is as follows. Phosphorylates diacylglycerol (DAG) to generate phosphatidic acid (PA). In Drosophila grimshawi (Hawaiian fruit fly), this protein is Diacylglycerol kinase eta.